Consider the following 139-residue polypeptide: uncharacterized protein (139 aa).

An HTH marR-type domain is found at 8 to 139 (ANLLDHALTK…FLAIIAKLAQ (132 aa)). The H-T-H motif DNA-binding region spans 53–76 (IKDILKEVTLSPSATTTALNHLEQ).

This is an uncharacterized protein from Bacillus subtilis (strain 168).